Consider the following 450-residue polypeptide: Signal recognition particle 54 kDa protein (450 aa).

Residues G107–T114, D188–R192, and T247–D250 contribute to the GTP site.

It belongs to the GTP-binding SRP family. SRP54 subfamily. Part of the signal recognition particle protein translocation system, which is composed of SRP and FtsY. Archaeal SRP consists of a 7S RNA molecule of 300 nucleotides and two protein subunits: SRP54 and SRP19.

Its subcellular location is the cytoplasm. It carries out the reaction GTP + H2O = GDP + phosphate + H(+). Involved in targeting and insertion of nascent membrane proteins into the cytoplasmic membrane. Binds to the hydrophobic signal sequence of the ribosome-nascent chain (RNC) as it emerges from the ribosomes. The SRP-RNC complex is then targeted to the cytoplasmic membrane where it interacts with the SRP receptor FtsY. This chain is Signal recognition particle 54 kDa protein, found in Methanococcus vannielii (strain ATCC 35089 / DSM 1224 / JCM 13029 / OCM 148 / SB).